We begin with the raw amino-acid sequence, 343 residues long: GDSL esterase/lipase EXL4 (343 aa).

The first 21 residues, 1–21, serve as a signal peptide directing secretion; that stretch reads MCSKITLVLTLFSSYFISTDA. Asn23 is a glycosylation site (N-linked (GlcNAc...) asparagine). Catalysis depends on Ser35, which acts as the Nucleophile. Residues Asp318 and His321 contribute to the active site.

It belongs to the 'GDSL' lipolytic enzyme family. In terms of tissue distribution, flower buds and pollen.

Its subcellular location is the secreted. The protein localises to the extracellular space. It localises to the extracellular matrix. It is found in the pollen coat. Required for the formation of pollen coats and male fertility. The polypeptide is GDSL esterase/lipase EXL4 (EXL4) (Arabidopsis thaliana (Mouse-ear cress)).